Consider the following 466-residue polypeptide: 3-isopropylmalate dehydratase large subunit (466 aa).

The [4Fe-4S] cluster site is built by Cys-347, Cys-407, and Cys-410.

The protein belongs to the aconitase/IPM isomerase family. LeuC type 1 subfamily. As to quaternary structure, heterodimer of LeuC and LeuD. The cofactor is [4Fe-4S] cluster.

It carries out the reaction (2R,3S)-3-isopropylmalate = (2S)-2-isopropylmalate. It participates in amino-acid biosynthesis; L-leucine biosynthesis; L-leucine from 3-methyl-2-oxobutanoate: step 2/4. Catalyzes the isomerization between 2-isopropylmalate and 3-isopropylmalate, via the formation of 2-isopropylmaleate. This is 3-isopropylmalate dehydratase large subunit from Escherichia coli O157:H7.